The sequence spans 517 residues: GMP synthase [glutamine-hydrolyzing] (517 aa).

A Glutamine amidotransferase type-1 domain is found at arginine 9–leucine 199. Residue cysteine 86 is the Nucleophile of the active site. Residues histidine 173 and glutamate 175 contribute to the active site. One can recognise a GMPS ATP-PPase domain in the interval tryptophan 200–arginine 392. Serine 227–serine 233 lines the ATP pocket.

In terms of assembly, homodimer.

It catalyses the reaction XMP + L-glutamine + ATP + H2O = GMP + L-glutamate + AMP + diphosphate + 2 H(+). It functions in the pathway purine metabolism; GMP biosynthesis; GMP from XMP (L-Gln route): step 1/1. In terms of biological role, catalyzes the synthesis of GMP from XMP. The protein is GMP synthase [glutamine-hydrolyzing] of Aliivibrio fischeri (strain MJ11) (Vibrio fischeri).